The sequence spans 338 residues: Ketol-acid reductoisomerase (NADP(+)) (338 aa).

The KARI N-terminal Rossmann domain maps to M1–T181. Residues Y24–Q27, R47, and S52 each bind NADP(+). The active site involves H107. G133 is an NADP(+) binding site. The 146-residue stretch at N182 to I327 folds into the KARI C-terminal knotted domain. Mg(2+) contacts are provided by D190, E194, E226, and E230. Position 251 (S251) interacts with substrate.

This sequence belongs to the ketol-acid reductoisomerase family. It depends on Mg(2+) as a cofactor.

The catalysed reaction is (2R)-2,3-dihydroxy-3-methylbutanoate + NADP(+) = (2S)-2-acetolactate + NADPH + H(+). It catalyses the reaction (2R,3R)-2,3-dihydroxy-3-methylpentanoate + NADP(+) = (S)-2-ethyl-2-hydroxy-3-oxobutanoate + NADPH + H(+). The protein operates within amino-acid biosynthesis; L-isoleucine biosynthesis; L-isoleucine from 2-oxobutanoate: step 2/4. It functions in the pathway amino-acid biosynthesis; L-valine biosynthesis; L-valine from pyruvate: step 2/4. Its function is as follows. Involved in the biosynthesis of branched-chain amino acids (BCAA). Catalyzes an alkyl-migration followed by a ketol-acid reduction of (S)-2-acetolactate (S2AL) to yield (R)-2,3-dihydroxy-isovalerate. In the isomerase reaction, S2AL is rearranged via a Mg-dependent methyl migration to produce 3-hydroxy-3-methyl-2-ketobutyrate (HMKB). In the reductase reaction, this 2-ketoacid undergoes a metal-dependent reduction by NADPH to yield (R)-2,3-dihydroxy-isovalerate. This is Ketol-acid reductoisomerase (NADP(+)) from Burkholderia cenocepacia (strain ATCC BAA-245 / DSM 16553 / LMG 16656 / NCTC 13227 / J2315 / CF5610) (Burkholderia cepacia (strain J2315)).